A 307-amino-acid chain; its full sequence is Nicotinamide/nicotinic acid mononucleotide adenylyltransferase 2 (307 aa).

NAD(+) is bound by residues S16 and F17. H24 contacts ATP. 2 residues coordinate NAD(+): W92 and T95. S-palmitoyl cysteine attachment occurs at residues C164 and C165. 5 residues coordinate NAD(+): G200, D202, L212, W213, and R232. 271–274 (TKSR) provides a ligand contact to ATP.

Belongs to the eukaryotic NMN adenylyltransferase family. In terms of assembly, monomer. Requires Mg(2+) as cofactor. In terms of processing, degraded in response to injured neurite. Degradation is caused by polyubiquitination by MYCBP2 after recognition by FBXO45. Post-translationally, palmitoylated; palmitoylation is required for membrane association. As to expression, expressed predominantly in the brain and nervous system.

Its subcellular location is the golgi apparatus membrane. It localises to the cytoplasmic vesicle membrane. The protein localises to the cytoplasm. It is found in the cell projection. The protein resides in the axon. The catalysed reaction is beta-nicotinamide D-ribonucleotide + ATP + H(+) = diphosphate + NAD(+). It carries out the reaction nicotinate beta-D-ribonucleotide + ATP + H(+) = deamido-NAD(+) + diphosphate. The protein operates within cofactor biosynthesis; NAD(+) biosynthesis; NAD(+) from nicotinamide D-ribonucleotide: step 1/1. It functions in the pathway cofactor biosynthesis; NAD(+) biosynthesis; deamido-NAD(+) from nicotinate D-ribonucleotide: step 1/1. Inhibited by P1-(adenosine-5')-P3-(nicotinamide-riboside-5')-triphosphate (Np3AD) and P1-(adenosine-5')-P4-(nicotinamide-riboside-5')-tetraphosphate (Np4AD). Its function is as follows. Nicotinamide/nicotinate-nucleotide adenylyltransferase that acts as an axon maintenance factor. Axon survival factor required for the maintenance of healthy axons: acts by delaying Wallerian axon degeneration, an evolutionarily conserved process that drives the loss of damaged axons. Catalyzes the formation of NAD(+) from nicotinamide mononucleotide (NMN) and ATP. Can also use the deamidated form; nicotinic acid mononucleotide (NaMN) as substrate but with a lower efficiency. Cannot use triazofurin monophosphate (TrMP) as substrate. Also catalyzes the reverse reaction, i.e. the pyrophosphorolytic cleavage of NAD(+). For the pyrophosphorolytic activity prefers NAD(+), NADH and NaAD as substrates and degrades nicotinic acid adenine dinucleotide phosphate (NHD) less effectively. Fails to cleave phosphorylated dinucleotides NADP(+), NADPH and NaADP(+). Also acts as an activator of ADP-ribosylation by supporting the catalytic activity of PARP16 and promoting mono-ADP-ribosylation of ribosomes by PARP16. May be involved in the maintenance of axonal integrity. The sequence is that of Nicotinamide/nicotinic acid mononucleotide adenylyltransferase 2 from Mus musculus (Mouse).